Here is a 351-residue protein sequence, read N- to C-terminus: Homocitrate synthase (351 aa).

The 250-residue stretch at 23-272 (IKFCDTTLRD…KLPVDLDTTS (250 aa)) folds into the Pyruvate carboxyltransferase domain.

The protein belongs to the alpha-IPM synthase/homocitrate synthase family.

It catalyses the reaction acetyl-CoA + 2-oxoglutarate + H2O = (2R)-homocitrate + CoA + H(+). Functionally, this protein is a Fe-Mo-cofactor biosynthetic component. This Frankia alni protein is Homocitrate synthase (nifV).